The chain runs to 405 residues: L-carnitine CoA-transferase (405 aa).

Lys-97 and Arg-104 together coordinate CoA. Asp-169 (nucleophile) is an active-site residue.

It belongs to the CoA-transferase III family. CaiB subfamily. As to quaternary structure, homodimer.

It is found in the cytoplasm. The enzyme catalyses crotonobetainyl-CoA + (R)-carnitine = crotonobetaine + (R)-carnitinyl-CoA. It catalyses the reaction 4-(trimethylamino)butanoyl-CoA + (R)-carnitine = (R)-carnitinyl-CoA + 4-(trimethylamino)butanoate. The protein operates within amine and polyamine metabolism; carnitine metabolism. Functionally, catalyzes the reversible transfer of the CoA moiety from gamma-butyrobetainyl-CoA to L-carnitine to generate L-carnitinyl-CoA and gamma-butyrobetaine. Is also able to catalyze the reversible transfer of the CoA moiety from gamma-butyrobetainyl-CoA or L-carnitinyl-CoA to crotonobetaine to generate crotonobetainyl-CoA. The chain is L-carnitine CoA-transferase from Escherichia fergusonii (strain ATCC 35469 / DSM 13698 / CCUG 18766 / IAM 14443 / JCM 21226 / LMG 7866 / NBRC 102419 / NCTC 12128 / CDC 0568-73).